Reading from the N-terminus, the 493-residue chain is Glycerol kinase (493 aa).

Thr13 contacts ADP. Residues Thr13, Thr14, and Ser15 each contribute to the ATP site. Thr13 is a sn-glycerol 3-phosphate binding site. Arg17 serves as a coordination point for ADP. Residues Arg83, Glu84, Tyr135, and Asp244 each coordinate sn-glycerol 3-phosphate. 5 residues coordinate glycerol: Arg83, Glu84, Tyr135, Asp244, and Gln245. Positions 266 and 309 each coordinate ADP. ATP contacts are provided by Thr266, Gly309, Gln313, and Gly410. ADP-binding residues include Gly410 and Asn414.

This sequence belongs to the FGGY kinase family.

The catalysed reaction is glycerol + ATP = sn-glycerol 3-phosphate + ADP + H(+). The protein operates within polyol metabolism; glycerol degradation via glycerol kinase pathway; sn-glycerol 3-phosphate from glycerol: step 1/1. Inhibited by fructose 1,6-bisphosphate (FBP). Functionally, key enzyme in the regulation of glycerol uptake and metabolism. Catalyzes the phosphorylation of glycerol to yield sn-glycerol 3-phosphate. This is Glycerol kinase from Shewanella halifaxensis (strain HAW-EB4).